The following is a 181-amino-acid chain: NADH-quinone oxidoreductase subunit B (181 aa).

Residues cysteine 45, cysteine 46, cysteine 111, and cysteine 140 each coordinate [4Fe-4S] cluster.

The protein belongs to the complex I 20 kDa subunit family. In terms of assembly, NDH-1 is composed of 15 different subunits. Subunits NuoB, C, D, E, F, and G constitute the peripheral sector of the complex. Requires [4Fe-4S] cluster as cofactor.

It localises to the cell membrane. The enzyme catalyses a quinone + NADH + 5 H(+)(in) = a quinol + NAD(+) + 4 H(+)(out). In terms of biological role, NDH-1 shuttles electrons from NADH, via FMN and iron-sulfur (Fe-S) centers, to quinones in the respiratory chain. The immediate electron acceptor for the enzyme in this species is believed to be a menaquinone. Couples the redox reaction to proton translocation (for every two electrons transferred, four hydrogen ions are translocated across the cytoplasmic membrane), and thus conserves the redox energy in a proton gradient. In Deinococcus radiodurans (strain ATCC 13939 / DSM 20539 / JCM 16871 / CCUG 27074 / LMG 4051 / NBRC 15346 / NCIMB 9279 / VKM B-1422 / R1), this protein is NADH-quinone oxidoreductase subunit B.